The primary structure comprises 151 residues: Nucleoside diphosphate kinase (151 aa).

Residues Lys-11, Phe-59, Arg-87, Thr-93, Arg-104, and Asn-114 each coordinate ATP. The active-site Pros-phosphohistidine intermediate is the His-117.

This sequence belongs to the NDK family. Requires Mg(2+) as cofactor.

It catalyses the reaction a 2'-deoxyribonucleoside 5'-diphosphate + ATP = a 2'-deoxyribonucleoside 5'-triphosphate + ADP. The enzyme catalyses a ribonucleoside 5'-diphosphate + ATP = a ribonucleoside 5'-triphosphate + ADP. Functionally, major role in the synthesis of nucleoside triphosphates other than ATP. The ATP gamma phosphate is transferred to the NDP beta phosphate via a ping-pong mechanism, using a phosphorylated active-site intermediate. The polypeptide is Nucleoside diphosphate kinase (NDK1) (Eremothecium gossypii (strain ATCC 10895 / CBS 109.51 / FGSC 9923 / NRRL Y-1056) (Yeast)).